The following is a 2055-amino-acid chain: Citron Rho-interacting kinase (2055 aa).

At M1 the chain carries N-acetylmethionine. The region spanning 97 to 359 is the Protein kinase domain; that stretch reads FEVRSLVGCG…FEGLCCHPFF (263 aa). ATP contacts are provided by residues 103-111 and K126; that span reads VGCGHFAEV. D221 acts as the Proton acceptor in catalysis. The region spanning 360–430 is the AGC-kinase C-terminal domain; it reads ARTDWNNIRN…SKALGYLGRS (71 aa). Phosphoserine occurs at positions 432, 439, 479, and 581. 3 coiled-coil regions span residues 441–1086, 1091–1247, and 1275–1325; these read AKVS…QWEA, LGDE…VLYS, and AKKK…RKAT. Residues 1132–1328 form an interaction with Rho/Rac region; it reads LAVKEHKAEI…AAHRKATDHP (197 aa). Y1237 carries the phosphotyrosine modification. Residues 1316–1329 are compositionally biased toward basic and acidic residues; the sequence is REEAAHRKATDHPH. Disordered stretches follow at residues 1316-1336 and 1348-1377; these read REEA…PATA and SPEH…EFSR. A compositionally biased stretch (low complexity) spans 1353–1363; it reads PSAMSLLAPPS. Residues 1365-1377 are compositionally biased toward basic and acidic residues; it reads RRKESSTPEEFSR. Residues 1388–1437 form a Phorbol-ester/DAG-type zinc finger; that stretch reads PHRFNVGLNMRATKCAVCLDTVHFGRQASKCLECQVMCHPKCSTCLPATC. Residues 1469-1589 enclose the PH domain; it reads SLHLEGWMKV…WVTALESVVA (121 aa). Positions 1617–1907 constitute a CNH domain; sequence RLDMNCTLPF…RYLGPAISSG (291 aa). Residue K1747 is modified to N6-acetyllysine. The segment at 1932-2040 is disordered; that stretch reads SGTEQHRVPS…RGRLPAGAVR (109 aa). A compositionally biased stretch (polar residues) spans 1939–1948; it reads VPSTSRSSPN. Position 1966 is a phosphoserine (S1966). A compositionally biased stretch (basic and acidic residues) spans 1974–2031; that stretch reads SHPREPSTPHRYRDREGRTELRRDKSPGRPLEREKSPGRMLSTRRERSPGRLFEDSSR. An SH3-binding motif is present at residues 1979–1984; that stretch reads PSTPHR. S2021 is modified (phosphoserine). Phosphothreonine is present on T2041.

It belongs to the protein kinase superfamily. AGC Ser/Thr protein kinase family. As to quaternary structure, interacts with TTC3. Homodimer. Directly interacts with KIF14 depending on the activation state (stronger interaction with the kinase-dead form). In terms of tissue distribution, a major signal was observed in testis and brain, but it was also detected in thymus, spleen, kidney, heart and lung.

It is found in the cytoplasm. It carries out the reaction L-seryl-[protein] + ATP = O-phospho-L-seryl-[protein] + ADP + H(+). The catalysed reaction is L-threonyl-[protein] + ATP = O-phospho-L-threonyl-[protein] + ADP + H(+). Its function is as follows. Plays a role in cytokinesis. Required for KIF14 localization to the central spindle and midbody. Probable RHO/RAC effector that binds to the GTP-bound forms of RHO and RAC1. It probably binds p21 with a tighter specificity in vivo. Displays serine/threonine protein kinase activity. Plays an important role in the regulation of cytokinesis and the development of the central nervous system. Phosphorylates MYL9/MLC2. This chain is Citron Rho-interacting kinase (Cit), found in Mus musculus (Mouse).